A 393-amino-acid polypeptide reads, in one-letter code: Protein phosphatase 2C homolog 4 (393 aa).

Residues 33–368 (YNCVGSMQGY…DNMTAIIVVL (336 aa)) enclose the PPM-type phosphatase domain. Aspartate 83, glycine 84, aspartate 310, and aspartate 359 together coordinate Mn(2+).

The protein belongs to the PP2C family. Requires Mg(2+) as cofactor. It depends on Mn(2+) as a cofactor.

The enzyme catalyses O-phospho-L-seryl-[protein] + H2O = L-seryl-[protein] + phosphate. It catalyses the reaction O-phospho-L-threonyl-[protein] + H2O = L-threonyl-[protein] + phosphate. The polypeptide is Protein phosphatase 2C homolog 4 (PTC4) (Saccharomyces cerevisiae (strain ATCC 204508 / S288c) (Baker's yeast)).